We begin with the raw amino-acid sequence, 254 residues long: MEGVMGQVEKRPISTIVFIVAMQKEAQPLINRLRLVEEVNTPFPKEVTWIMFKGMYKDLNINIVCPGKDSTLGVESVGTVPASLVTYASILAIQPDLIINAGTAGGFKAKGACISDVYVVSTVAFHDRRIPVPVLDIYGVGMRNTFPTPNLIKELNLKVGRLSTGDSMDMSPHDEESITANDATVKDMEGAAVAYVADIFKVPTILIKGVTDIVDGNRPTSEEFLENLAAVTAKLDESLTKVIDFISGKCLSDL.

N-acetylmethionine is present on M1. E25 serves as the catalytic Proton acceptor. Residues T103 and 186–189 (KDME) each bind S-methyl-5'-thioadenosine. Adenine-binding residues include K186 and D212. D212 acts as the Proton donor in catalysis.

This sequence belongs to the PNP/UDP phosphorylase family. MtnN subfamily. Homodimer.

It carries out the reaction S-methyl-5'-thioadenosine + H2O = 5-(methylsulfanyl)-D-ribose + adenine. The catalysed reaction is S-adenosyl-L-homocysteine + H2O = S-(5-deoxy-D-ribos-5-yl)-L-homocysteine + adenine. It catalyses the reaction 5'-deoxyadenosine + H2O = 5-deoxy-D-ribose + adenine. It participates in amino-acid biosynthesis; L-methionine biosynthesis via salvage pathway; S-methyl-5-thio-alpha-D-ribose 1-phosphate from S-methyl-5'-thioadenosine (hydrolase route): step 1/2. In terms of biological role, enzyme of the methionine cycle that catalyzes the irreversible cleavage of the glycosidic bond in 5'-methylthioadenosine (MTA) and S-adenosylhomocysteine (SAH/AdoHcy) to a lesser extent, to adenine and the corresponding thioribose, 5'-methylthioribose and S-ribosylhomocysteine, respectively. Contributes to the maintenance of AdoMet homeostasis and is required to sustain high rates of ethylene synthesis. The sequence is that of 5'-methylthioadenosine/S-adenosylhomocysteine nucleosidase (MTN2) from Arabidopsis thaliana (Mouse-ear cress).